Consider the following 164-residue polypeptide: Peptidyl-prolyl cis-trans isomerase A-like 4A (164 aa).

The region spanning 7-163 (FFDITVDGKP…KKITIADCGQ (157 aa)) is the PPIase cyclophilin-type domain.

It belongs to the cyclophilin-type PPIase family. PPIase A subfamily. In terms of tissue distribution, highly expressed in brain, ovary and mammary gland. Moderately expressed in lung, salivary gland, kidney, skin, adipose tissue, intestine and spleen. Weakly expressed in skeletal muscle, liver and stomach. Expressed in pleiomorphic and undifferentiated liposarcomas, osteosarcomas and breast carcinomas.

Its subcellular location is the cytoplasm. The catalysed reaction is [protein]-peptidylproline (omega=180) = [protein]-peptidylproline (omega=0). Functionally, PPIases accelerate the folding of proteins. It catalyzes the cis-trans isomerization of proline imidic peptide bonds in oligopeptides. This chain is Peptidyl-prolyl cis-trans isomerase A-like 4A, found in Homo sapiens (Human).